Reading from the N-terminus, the 310-residue chain is Methionyl-tRNA formyltransferase (310 aa).

A (6S)-5,6,7,8-tetrahydrofolate-binding site is contributed by 110 to 113 (SVLP).

The protein belongs to the Fmt family.

It carries out the reaction L-methionyl-tRNA(fMet) + (6R)-10-formyltetrahydrofolate = N-formyl-L-methionyl-tRNA(fMet) + (6S)-5,6,7,8-tetrahydrofolate + H(+). Functionally, attaches a formyl group to the free amino group of methionyl-tRNA(fMet). The formyl group appears to play a dual role in the initiator identity of N-formylmethionyl-tRNA by promoting its recognition by IF2 and preventing the misappropriation of this tRNA by the elongation apparatus. This chain is Methionyl-tRNA formyltransferase, found in Mycolicibacterium vanbaalenii (strain DSM 7251 / JCM 13017 / BCRC 16820 / KCTC 9966 / NRRL B-24157 / PYR-1) (Mycobacterium vanbaalenii).